A 193-amino-acid polypeptide reads, in one-letter code: dTTP/UTP pyrophosphatase (193 aa).

Aspartate 75 acts as the Proton acceptor in catalysis.

It belongs to the Maf family. YhdE subfamily. The cofactor is a divalent metal cation.

Its subcellular location is the cytoplasm. The catalysed reaction is dTTP + H2O = dTMP + diphosphate + H(+). It catalyses the reaction UTP + H2O = UMP + diphosphate + H(+). In terms of biological role, nucleoside triphosphate pyrophosphatase that hydrolyzes dTTP and UTP. May have a dual role in cell division arrest and in preventing the incorporation of modified nucleotides into cellular nucleic acids. In Chlorobium phaeovibrioides (strain DSM 265 / 1930) (Prosthecochloris vibrioformis (strain DSM 265)), this protein is dTTP/UTP pyrophosphatase.